The chain runs to 57 residues: Cecropin-A (57 aa).

An N-terminal signal peptide occupies residues 1 to 21 (IFFFVFACLLALSAVSAAPEP).

The protein belongs to the cecropin family.

The protein resides in the secreted. In terms of biological role, cecropins have lytic and antibacterial activity against several Gram-positive and Gram-negative bacteria. The polypeptide is Cecropin-A (CECA) (Spodoptera litura (Asian cotton leafworm)).